The sequence spans 1641 residues: Histone-lysine N-methyltransferase SETD1 (1641 aa).

Residues 1–23 are disordered; sequence MQDVRNINLVNNSSNSHDSSLAN. The span at 8–23 shows a compositional bias: low complexity; it reads NLVNNSSNSHDSSLAN. An RRM domain is found at 101–179; that stretch reads VEVTIVNLND…KILDVFCDPF (79 aa). Disordered stretches follow at residues 236–384, 537–596, 831–915, 930–949, 1119–1155, and 1205–1226; these read YTTQ…IDQR, APPF…SDEE, RIRK…SSSS, KART…NLNQ, QEKR…RKTA, and NSKG…SSQA. Residues 244–284 are compositionally biased toward basic and acidic residues; that stretch reads IPNRSRDRNWNRDKERERDRHFKERSRHSSERSYDRDRGMR. The span at 291–300 shows a compositional bias: basic residues; sequence IRRRRTFYRR. 2 stretches are compositionally biased toward basic and acidic residues: residues 308-341 and 349-384; these read EDSR…ESFR and KGRD…IDQR. Positions 556–568 are enriched in low complexity; that stretch reads EVFSDVNSDSNNS. Basic and acidic residues-rich tracts occupy residues 569 to 579 and 844 to 867; these read ENKKRSCEKNN and NFLE…KEDS. A compositionally biased stretch (low complexity) spans 904-915; the sequence is SASSFFSSSSSS. Composition is skewed to basic and acidic residues over residues 930–939 and 1119–1128; these read KARTSEEDSP and QEKRIEKSLD. Residues 1091 to 1132 adopt a coiled-coil conformation; that stretch reads SEEEKEYQERRKRNTEYMAQMEREFLEEQEKRIEKSLDKNLQ. Polar residues-rich tracts occupy residues 1129–1145 and 1205–1217; these read KNLQ…NSPR and NSKG…QSPV. Residues 1473–1478 carry the RxxxRR motif motif; the sequence is RSNQRR. Residues 1502 to 1619 form the SET domain; sequence KQLKFAKSAI…INEEITYDYK (118 aa). Residue Tyr-1618 coordinates S-adenosyl-L-methionine. In terms of domain architecture, Post-SET spans 1625-1641; it reads EKIPCLCGAQGCRGTLN.

The protein belongs to the class V-like SAM-binding methyltransferase superfamily. Component of the Set1C/COMPASS complex, composed at least of the catalytic subunit Set1, wds/WDR5, Wdr82, Rbbp5, ash2, Cfp1/CXXC1, hcf and Dpy-30L1.

The protein resides in the nucleus. It is found in the chromosome. The enzyme catalyses L-lysyl(4)-[histone H3] + 3 S-adenosyl-L-methionine = N(6),N(6),N(6)-trimethyl-L-lysyl(4)-[histone H3] + 3 S-adenosyl-L-homocysteine + 3 H(+). It catalyses the reaction N(6)-methyl-L-lysyl(4)-[histone H3] + S-adenosyl-L-methionine = N(6),N(6)-dimethyl-L-lysyl(4)-[histone H3] + S-adenosyl-L-homocysteine + H(+). The catalysed reaction is N(6),N(6)-dimethyl-L-lysyl(4)-[histone H3] + S-adenosyl-L-methionine = N(6),N(6),N(6)-trimethyl-L-lysyl(4)-[histone H3] + S-adenosyl-L-homocysteine + H(+). Functionally, catalytic component of the COMPASS (Set1C) complex that specifically mono-, di- and trimethylates histone H3 to form H3K4me1/2/3. Binds RNAs which might negatively affect its histone methyltransferase activity. COMPASS recognizes ubiquitinated H2B on one face of the nucleosome which stimulates the methylation of H3 on the opposing face. Set1-dependent trimethylation regulates chromatin changes at active promoters that ensure optimal RNA polymerase II release into productive elongation, thereby contributing to optimal transcription. This chain is Histone-lysine N-methyltransferase SETD1, found in Drosophila melanogaster (Fruit fly).